The sequence spans 249 residues: Ubiquinone/menaquinone biosynthesis C-methyltransferase UbiE (249 aa).

Residues threonine 72, aspartate 93, and 121–122 (NA) contribute to the S-adenosyl-L-methionine site.

The protein belongs to the class I-like SAM-binding methyltransferase superfamily. MenG/UbiE family.

It catalyses the reaction a 2-demethylmenaquinol + S-adenosyl-L-methionine = a menaquinol + S-adenosyl-L-homocysteine + H(+). The catalysed reaction is a 2-methoxy-6-(all-trans-polyprenyl)benzene-1,4-diol + S-adenosyl-L-methionine = a 5-methoxy-2-methyl-3-(all-trans-polyprenyl)benzene-1,4-diol + S-adenosyl-L-homocysteine + H(+). The protein operates within quinol/quinone metabolism; menaquinone biosynthesis; menaquinol from 1,4-dihydroxy-2-naphthoate: step 2/2. Its pathway is cofactor biosynthesis; ubiquinone biosynthesis. Functionally, methyltransferase required for the conversion of demethylmenaquinol (DMKH2) to menaquinol (MKH2) and the conversion of 2-polyprenyl-6-methoxy-1,4-benzoquinol (DDMQH2) to 2-polyprenyl-3-methyl-6-methoxy-1,4-benzoquinol (DMQH2). This chain is Ubiquinone/menaquinone biosynthesis C-methyltransferase UbiE, found in Hahella chejuensis (strain KCTC 2396).